The primary structure comprises 105 residues: Cortistatin (105 aa).

Positions 1-18 (MPLSPGLLLLLLSGATAT) are cleaved as a signal peptide. Residues 19 to 74 (AALPLEGGPTGRDSEHMQEAAGIRKSSLLTFLAWWFEWTSQASAGPLIGEEAREVA) constitute a propeptide that is removed on maturation. A disulfide bridge connects residues Cys93 and Cys104.

It belongs to the somatostatin family. In terms of tissue distribution, expressed in a subset of GABAergic cells in the cortex and hippocampus.

The protein localises to the secreted. Binds to all human somatostatin receptor (SSTR) subtypes. It also inhibits cAMP production induced by forskolin through SSTRs. The sequence is that of Cortistatin (CORT) from Homo sapiens (Human).